We begin with the raw amino-acid sequence, 513 residues long: ATP synthase subunit alpha (513 aa).

169-176 (GDRQTGKS) lines the ATP pocket.

Belongs to the ATPase alpha/beta chains family. As to quaternary structure, F-type ATPases have 2 components, CF(1) - the catalytic core - and CF(0) - the membrane proton channel. CF(1) has five subunits: alpha(3), beta(3), gamma(1), delta(1), epsilon(1). CF(0) has three main subunits: a(1), b(2) and c(9-12). The alpha and beta chains form an alternating ring which encloses part of the gamma chain. CF(1) is attached to CF(0) by a central stalk formed by the gamma and epsilon chains, while a peripheral stalk is formed by the delta and b chains.

Its subcellular location is the cell membrane. It carries out the reaction ATP + H2O + 4 H(+)(in) = ADP + phosphate + 5 H(+)(out). Produces ATP from ADP in the presence of a proton gradient across the membrane. The alpha chain is a regulatory subunit. The sequence is that of ATP synthase subunit alpha from Baumannia cicadellinicola subsp. Homalodisca coagulata.